The chain runs to 267 residues: Diacetylchitobiose deacetylase (267 aa).

The protein belongs to the PIGL family. In terms of assembly, homohexamer.

The protein localises to the cytoplasm. The catalysed reaction is N,N'-diacetylchitobiose + H2O = beta-D-glucosaminyl-(1-&gt;4)-N-acetyl-D-glucosamine + acetate. The protein operates within glycan degradation; chitin degradation. Deacylates the non-reducing end of diacetylchitobiose (GlcNAc2). Can also use N-acetylglucosamine (GlcNAc) and N-acetylchitotriose (GlcNAc3). Probably involved in chitin degradation. The polypeptide is Diacetylchitobiose deacetylase (dac) (Thermococcus kodakarensis (strain ATCC BAA-918 / JCM 12380 / KOD1) (Pyrococcus kodakaraensis (strain KOD1))).